We begin with the raw amino-acid sequence, 62 residues long: MKSTLMTASLLILVLLSIVDYASVYAELIDSEISMERHWINACFNICMKISSDQKYCKSFCG.

The signal sequence occupies residues 1-26 (MKSTLMTASLLILVLLSIVDYASVYA). The propeptide occupies 27–36 (ELIDSEISME). Intrachain disulfides connect Cys-43–Cys-61 and Cys-47–Cys-57.

This sequence belongs to the short scorpion toxin superfamily. Potassium channel inhibitor kappa-KTx family. Kappa-KTx 3 subfamily. In terms of tissue distribution, expressed by the venom gland.

It localises to the secreted. Potassium channel inhibitor (Kv). The protein is Potassium channel toxin kappa-KTx 3.2 of Heterometrus petersii (Asian forest scorpion).